The chain runs to 310 residues: Formimidoylglutamase (310 aa).

Mn(2+)-binding residues include H120, D148, H150, D152, D233, and D235.

It belongs to the arginase family. It depends on Mn(2+) as a cofactor.

It catalyses the reaction N-formimidoyl-L-glutamate + H2O = formamide + L-glutamate. It participates in amino-acid degradation; L-histidine degradation into L-glutamate; L-glutamate from N-formimidoyl-L-glutamate (hydrolase route): step 1/1. Its function is as follows. Catalyzes the conversion of N-formimidoyl-L-glutamate to L-glutamate and formamide. This chain is Formimidoylglutamase, found in Nocardia farcinica (strain IFM 10152).